The chain runs to 624 residues: (-)-beta-phellandrene synthase 1, chloroplastic (624 aa).

Residues methionine 1–serine 48 constitute a chloroplast transit peptide. Mg(2+)-binding residues include aspartate 375, aspartate 379, and aspartate 527. The short motif at aspartate 375–aspartate 379 is the DDXXD motif element.

Belongs to the terpene synthase family. Tpsd subfamily. It depends on Mg(2+) as a cofactor. Mn(2+) serves as cofactor.

The protein resides in the plastid. It localises to the chloroplast. The enzyme catalyses (2E)-geranyl diphosphate = (-)-beta-phellandrene + diphosphate. The protein operates within terpene metabolism; oleoresin biosynthesis. Terpene synthase (TPS) involved in the biosynthesis of monoterpene natural products included in conifer oleoresin secretions and volatile emissions; these compounds contribute to biotic and abiotic stress defense against herbivores and pathogens. Catalyzes the conversion of (2E)-geranyl diphosphate (GPP) to (-)-beta-phellandrene. The chain is (-)-beta-phellandrene synthase 1, chloroplastic from Picea sitchensis (Sitka spruce).